We begin with the raw amino-acid sequence, 390 residues long: Trehalose-phosphate phosphatase (390 aa).

Asp150 serves as the catalytic Nucleophile. Mg(2+)-binding residues include Asp150, Asp152, and Asp333. Substrate is bound at residue 150 to 152 (DFD).

It belongs to the trehalose phosphatase family. The cofactor is Mg(2+).

The catalysed reaction is alpha,alpha-trehalose 6-phosphate + H2O = alpha,alpha-trehalose + phosphate. Its pathway is glycan biosynthesis; trehalose biosynthesis. Removes the phosphate from trehalose 6-phosphate to produce free trehalose. The polypeptide is Trehalose-phosphate phosphatase (otsB) (Mycobacterium marinum (strain ATCC BAA-535 / M)).